Consider the following 345-residue polypeptide: Serpentine receptor class beta-5 (345 aa).

Topologically, residues 1-22 (MAEINQTKCDLAFQISYHPIYR) are extracellular. The N-linked (GlcNAc...) asparagine glycan is linked to asparagine 5. A helical transmembrane segment spans residues 23-43 (LAQFWTLSVSLLAVPSLLYFL). Residues 44-57 (LKRVLLLPFHGNLK) lie on the Cytoplasmic side of the membrane. The helical transmembrane segment at 58 to 78 (CLLITYFSSIFLYALVLCFDF) threads the bilayer. Over 79–103 (SYQCLIPFIVTTKCSLIIDQTLYKC) the chain is Extracellular. A helical transmembrane segment spans residues 104–124 (GHMTSLFFLTTPMLLPFGFSI). The Cytoplasmic segment spans residues 125 to 142 (ERFVAVGMAYKYEKMRTL). The helical transmembrane segment at 143–163 (LGPILCFILVAPNFVVFYFLF) threads the bilayer. Topologically, residues 164-189 (RDEQFTDSFISFLVLPNTPAVQFNNY) are extracellular. Residues 190 to 210 (LWFLLYAKIGNFCCNCVLLIF) traverse the membrane as a helical segment. The Cytoplasmic portion of the chain corresponds to 211-241 (HKRFKNTYLKKKTSLSVRYALEEISNSSKFT). A helical transmembrane segment spans residues 242–262 (LILTFTHLVFFGAYTIGSILV). Residues 263–280 (RTLGESFFGNFLNFYVAR) are Extracellular-facing. Residues 281–301 (GVNCAVPTYNLLIAFVGLISL) traverse the membrane as a helical segment. Residues 302-345 (RQLNSRRHAKILTKVLIRVTGQEGARNYDDIIMQQWNTVSNRTR) lie on the Cytoplasmic side of the membrane.

It belongs to the nematode receptor-like protein srb family. In terms of tissue distribution, expressed throughout the head.

Its subcellular location is the cell membrane. It localises to the perikaryon. The protein resides in the cell projection. The protein localises to the dendrite. Its function is as follows. G-protein coupled receptor. Plays a role in the navigational capacity of sperm and promotes the targeting of sperm derived from males to the fertilization site in the uterus of hermaphrodites. This chain is Serpentine receptor class beta-5, found in Caenorhabditis elegans.